Consider the following 245-residue polypeptide: tRNA pseudouridine synthase A (245 aa).

The Nucleophile role is filled by Asp52. Residue Tyr111 coordinates substrate.

Belongs to the tRNA pseudouridine synthase TruA family. In terms of assembly, homodimer.

The catalysed reaction is uridine(38/39/40) in tRNA = pseudouridine(38/39/40) in tRNA. In terms of biological role, formation of pseudouridine at positions 38, 39 and 40 in the anticodon stem and loop of transfer RNAs. The chain is tRNA pseudouridine synthase A from Wolbachia sp. subsp. Drosophila simulans (strain wRi).